Reading from the N-terminus, the 599-residue chain is Tail knob protein gp9 (599 aa).

Belongs to the picovirinae distal tube protein family. In terms of assembly, homohexamer; forms a hexameric tube structure with six flexible hydrophobic loops.

It is found in the virion. Distal (knob) tail protein that plugs the end of the tube before DNA ejection and forms a channel perforating the host membrane during ejection. This is Tail knob protein gp9 (9) from Bacillus phage PZA (Bacteriophage PZA).